Here is a 375-residue protein sequence, read N- to C-terminus: 2-oxoglutarate synthase subunit KorA (375 aa).

In terms of assembly, heterotetramer of the KorA, KorB, KorC and KorD subunits.

It catalyses the reaction 2 oxidized [2Fe-2S]-[ferredoxin] + 2-oxoglutarate + CoA = succinyl-CoA + 2 reduced [2Fe-2S]-[ferredoxin] + CO2 + H(+). The protein is 2-oxoglutarate synthase subunit KorA (korA) of Methanothermobacter marburgensis (strain ATCC BAA-927 / DSM 2133 / JCM 14651 / NBRC 100331 / OCM 82 / Marburg) (Methanobacterium thermoautotrophicum).